The chain runs to 898 residues: Methionine--tRNA ligase, cytoplasmic (898 aa).

Residues 74-198 form the GST C-terminal domain; it reads GWEQDDLTNQ…VLKQQGVLAL (125 aa). A 'HIGH' region motif is present at residues 273 to 283; it reads PYVNNVPHLGN. Residues 593-597 carry the 'KMSKS' region motif; that stretch reads KFSKS. An ATP-binding site is contributed by lysine 596. A Phosphoserine modification is found at serine 825. Threonine 833 carries the post-translational modification Phosphothreonine. The 57-residue stretch at 839–895 folds into the WHEP-TRS domain; that stretch reads QIQALTEEVTKQGNIVRELKAQKADKNQIAAEVAKLLDLKKQLALAEGKPLETSKGK.

It belongs to the class-I aminoacyl-tRNA synthetase family. Monomer. Part of a multisubunit complex that groups tRNA ligases for Arg (RARS1), Asp (DARS1), Gln (QARS1), Ile (IARS1), Leu (LARS1), Lys (KARS1), Met (MARS1) the bifunctional ligase for Glu and Pro (EPRS1) and the auxiliary subunits AIMP1/p43, AIMP2/p38 and EEF1E1/p18. Forms a linear complex that contains MARS1, EEF1E1, EPRS1 and AIMP2 that is at the core of the multisubunit complex.

The protein localises to the cytoplasm. It is found in the cytosol. Its subcellular location is the nucleus. The protein resides in the nucleolus. It catalyses the reaction tRNA(Met) + L-methionine + ATP = L-methionyl-tRNA(Met) + AMP + diphosphate. Catalyzes the specific attachment of an amino acid to its cognate tRNA in a 2 step reaction: the amino acid (AA) is first activated by ATP to form AA-AMP and then transferred to the acceptor end of the tRNA. Plays a role in the synthesis of ribosomal RNA in the nucleolus. The polypeptide is Methionine--tRNA ligase, cytoplasmic (MARS1) (Bos taurus (Bovine)).